The sequence spans 346 residues: Large ribosomal subunit protein uL3 (346 aa).

Positions 324–346 (RPPKKKPPVERPQITYVSRESKQ) are disordered.

It belongs to the universal ribosomal protein uL3 family. In terms of assembly, part of the 50S ribosomal subunit. Forms a cluster with proteins L14 and L24e.

One of the primary rRNA binding proteins, it binds directly near the 3'-end of the 23S rRNA, where it nucleates assembly of the 50S subunit. The sequence is that of Large ribosomal subunit protein uL3 from Thermococcus kodakarensis (strain ATCC BAA-918 / JCM 12380 / KOD1) (Pyrococcus kodakaraensis (strain KOD1)).